The chain runs to 146 residues: Large ribosomal subunit protein uL15 (146 aa).

The span at 1-13 (MKLHELHSAEGSR) shows a compositional bias: basic and acidic residues. The segment at 1-55 (MKLHELHSAEGSRRNRKRVGRGTSSGYGKTSGRGQKGQLARQGGHTRLGFEGGQM) is disordered. Over residues 23-35 (TSSGYGKTSGRGQ) the composition is skewed to gly residues.

It belongs to the universal ribosomal protein uL15 family. As to quaternary structure, part of the 50S ribosomal subunit.

Binds to the 23S rRNA. In Lactobacillus acidophilus (strain ATCC 700396 / NCK56 / N2 / NCFM), this protein is Large ribosomal subunit protein uL15.